A 115-amino-acid chain; its full sequence is Anamorsin homolog 2 (115 aa).

A disordered region spans residues 30 to 115; sequence VKEATKGEDC…KVKLNLTDDI (86 aa). [2Fe-2S] cluster-binding residues include C39, C46, C49, and C51. The segment at 39–51 is fe-S binding site A; sequence CTTRRRACKNCTC. C77, C80, C88, and C91 together coordinate [4Fe-4S] cluster. 2 short sequence motifs (cx2C motif) span residues 77 to 80 and 88 to 91; these read CGNC and CATC. The tract at residues 77–91 is fe-S binding site B; it reads CGNCAKGDAFRCATC.

Belongs to the anamorsin family. Monomer. The cofactor is [2Fe-2S] cluster. [4Fe-4S] cluster serves as cofactor.

Its subcellular location is the cytoplasm. The protein localises to the mitochondrion intermembrane space. In terms of biological role, component of the cytosolic iron-sulfur (Fe-S) protein assembly (CIA) machinery. Required for the maturation of extramitochondrial Fe-S proteins. Part of an electron transfer chain functioning in an early step of cytosolic Fe-S biogenesis, facilitating the de novo assembly of a [4Fe-4S] cluster on the cytosolic Fe-S scaffold complex. Electrons are transferred from NADPH via a FAD- and FMN-containing diflavin oxidoreductase. Together with the diflavin oxidoreductase, also required for the assembly of the diferric tyrosyl radical cofactor of ribonucleotide reductase (RNR), probably by providing electrons for reduction during radical cofactor maturation in the catalytic small subunit. The chain is Anamorsin homolog 2 from Trypanosoma cruzi (strain CL Brener).